Consider the following 196-residue polypeptide: Orotate phosphoribosyltransferase (196 aa).

5-phospho-alpha-D-ribose 1-diphosphate-binding positions include Arg-102, Lys-103, Lys-106, His-108, and 129–137 (EDVVTTGGS). Orotate contacts are provided by Thr-133 and Arg-161.

The protein belongs to the purine/pyrimidine phosphoribosyltransferase family. PyrE subfamily. As to quaternary structure, homodimer. Mg(2+) is required as a cofactor.

The catalysed reaction is orotidine 5'-phosphate + diphosphate = orotate + 5-phospho-alpha-D-ribose 1-diphosphate. The protein operates within pyrimidine metabolism; UMP biosynthesis via de novo pathway; UMP from orotate: step 1/2. Its function is as follows. Catalyzes the transfer of a ribosyl phosphate group from 5-phosphoribose 1-diphosphate to orotate, leading to the formation of orotidine monophosphate (OMP). The chain is Orotate phosphoribosyltransferase from Prochlorococcus marinus (strain MIT 9303).